The following is a 218-amino-acid chain: Ras-related protein Rab-4A (218 aa).

GTP-binding residues include Gly-23, Thr-24, Gly-25, Lys-26, Ser-27, Cys-28, Ser-42, His-44, and Thr-45. Mg(2+) is bound at residue Ser-27. The Switch 1 signature appears at His-44–Glu-49. Residues Thr-45 and Asp-68 each contribute to the Mg(2+) site. The short motif at Ala-70–Thr-79 is the Switch 2 element. GTP is bound at residue Gly-71. Gln-72 carries the 5-glutamyl serotonin modification. Residues Asn-126, Lys-127, Asp-129, Ala-157, and Leu-158 each contribute to the GTP site. Ser-190 is subject to Phosphoserine. A Phosphoserine; by CDK1 modification is found at Ser-204. Residues Cys-216 and Cys-218 are each lipidated (S-geranylgeranyl cysteine). Cys-218 is subject to Cysteine methyl ester.

The protein belongs to the small GTPase superfamily. Rab family. As to quaternary structure, interacts with RAB11FIP1, RABEP1, ZFYVE20 and RUFY1. Interacts with SGSM1, SGSM2 and SGSM3. Interacts (membrane-bound form) with NDRG1; the interaction involves NDRG1 in vesicular recycling of E-cadherin. Interacts (in GTP-bound form) with GRIPAP1. Interacts with RABEP1 and RBSN. Does not interact with HPS4. Requires Mg(2+) as cofactor. Post-translationally, serotonylation of Gln-72 by TGM2 during activation and aggregation of platelets leads to constitutive activation of GTPase activity. In terms of processing, phosphorylated by CDK1 kinase during mitosis.

It is found in the membrane. The protein localises to the cytoplasm. The protein resides in the early endosome membrane. Its subcellular location is the recycling endosome membrane. It catalyses the reaction GTP + H2O = GDP + phosphate + H(+). Its activity is regulated as follows. Regulated by guanine nucleotide exchange factors (GEFs) which promote the exchange of bound GDP for free GTP. Regulated by GTPase activating proteins (GAPs) which increase the GTP hydrolysis activity. Inhibited by GDP dissociation inhibitors (GDIs). Its function is as follows. The small GTPases Rab are key regulators of intracellular membrane trafficking, from the formation of transport vesicles to their fusion with membranes. Rabs cycle between an inactive GDP-bound form and an active GTP-bound form that is able to recruit to membranes different sets of downstream effectors directly responsible for vesicle formation, movement, tethering and fusion. RAB4A is involved in protein transport. Also plays a role in vesicular traffic. Mediates VEGFR2 endosomal trafficking to enhance VEGFR2 signaling. Acts as a regulator of platelet alpha-granule release during activation and aggregation of platelets. This is Ras-related protein Rab-4A (RAB4A) from Bos taurus (Bovine).